A 109-amino-acid polypeptide reads, in one-letter code: Thiosulfate sulfurtransferase GlpE (109 aa).

The Rhodanese domain occupies 16-104 (REQGAVVVDI…WRSTYPAETA (89 aa)). Residue Cys-64 is the Cysteine persulfide intermediate of the active site.

The protein belongs to the GlpE family.

It is found in the cytoplasm. The enzyme catalyses thiosulfate + hydrogen cyanide = thiocyanate + sulfite + 2 H(+). The catalysed reaction is thiosulfate + [thioredoxin]-dithiol = [thioredoxin]-disulfide + hydrogen sulfide + sulfite + 2 H(+). Its function is as follows. Transferase that catalyzes the transfer of sulfur from thiosulfate to thiophilic acceptors such as cyanide or dithiols. May function in a CysM-independent thiosulfate assimilation pathway by catalyzing the conversion of thiosulfate to sulfite, which can then be used for L-cysteine biosynthesis. In Pseudomonas fluorescens (strain ATCC BAA-477 / NRRL B-23932 / Pf-5), this protein is Thiosulfate sulfurtransferase GlpE.